A 102-amino-acid polypeptide reads, in one-letter code: Small ribosomal subunit protein uS10 (102 aa).

Belongs to the universal ribosomal protein uS10 family. As to quaternary structure, part of the 30S ribosomal subunit.

Functionally, involved in the binding of tRNA to the ribosomes. The protein is Small ribosomal subunit protein uS10 of Sulfolobus acidocaldarius (strain ATCC 33909 / DSM 639 / JCM 8929 / NBRC 15157 / NCIMB 11770).